Consider the following 225-residue polypeptide: UPF0173 metal-dependent hydrolase PAE2160 (225 aa).

This sequence belongs to the UPF0173 family.

The chain is UPF0173 metal-dependent hydrolase PAE2160 from Pyrobaculum aerophilum (strain ATCC 51768 / DSM 7523 / JCM 9630 / CIP 104966 / NBRC 100827 / IM2).